The sequence spans 252 residues: 14-3-3 protein 10 (252 aa).

Belongs to the 14-3-3 family. In terms of assembly, homodimer.

This Solanum lycopersicum (Tomato) protein is 14-3-3 protein 10 (TFT10).